The following is a 140-amino-acid chain: Transmembrane protein 107 (140 aa).

Transmembrane regions (helical) follow at residues 7–27 (LVPS…TLFW) and 53–73 (LVAA…GFLS). The N-linked (GlcNAc...) asparagine glycan is linked to N79. 2 helical membrane-spanning segments follow: residues 83-103 (SLLS…FVFE) and 113-133 (IFTF…IAVF).

As to quaternary structure, part of the tectonic-like complex (also named B9 complex). Interacts with TMEM237, TMEM231, MKS1 and TMEM216.

It is found in the membrane. It localises to the cell projection. The protein localises to the cilium. Its function is as follows. Plays a role in cilia formation and embryonic patterning. Requires for normal Sonic hedgehog (Shh) signaling in the neural tube and acts in combination with GLI2 and GLI3 to pattern ventral and intermediate neuronal cell types. During ciliogenesis regulates the ciliary transition zone localization of some MKS complex proteins. This Mus musculus (Mouse) protein is Transmembrane protein 107.